The primary structure comprises 543 residues: Probable malate:quinone oxidoreductase (543 aa).

The protein belongs to the MQO family. FAD is required as a cofactor.

It carries out the reaction (S)-malate + a quinone = a quinol + oxaloacetate. It participates in carbohydrate metabolism; tricarboxylic acid cycle; oxaloacetate from (S)-malate (quinone route): step 1/1. This chain is Probable malate:quinone oxidoreductase, found in Acinetobacter baylyi (strain ATCC 33305 / BD413 / ADP1).